Reading from the N-terminus, the 851-residue chain is Internalin J (851 aa).

The first 25 residues, 1 to 25 (MKTTKIVIASLVSLTMVSNPLLTFA), serve as a signal peptide directing secretion. LRR repeat units follow at residues 94 to 115 (TLTS…EKLT), 116 to 136 (GLTK…SQNT), 137 to 157 (NLTY…TPLT), 158 to 179 (KLTY…QNPL), 180 to 200 (LTYL…HNTQ), 201 to 221 (LTEL…TPQT), 222 to 243 (QLTT…QNKL), 244 to 263 (LNRL…NQNI), 264 to 284 (QLTF…TPLT), 285 to 306 (QLTY…TLSK), 316 to 325 (DLLEIDLTHN), 338 to 357 (KIKE…DCQA), 359 to 368 (GITELDLSQN), and 380 to 402 (ELTE…NAHI). MucBP domains are found at residues 506-568 (PIKG…SQSV), 576-638 (IVAA…AQTV), 647-709 (APEK…SQTV), and 717-779 (IEAA…AQTV). The disordered stretch occupies residues 786-825 (NTNTDQPLPTKKPTNTTPTKPSNLKTTEVKKASDTLPKTG). Residues 792-811 (PLPTKKPTNTTPTKPSNLKT) show a composition bias toward low complexity. The short motif at 821–825 (LPKTG) is the LPXTG sorting signal element. Threonine 824 carries the pentaglycyl murein peptidoglycan amidated threonine modification. The propeptide at 825–851 (GDSAPWKSALLGVFLSSTALVIWKKKK) is removed by sortase A.

The protein belongs to the internalin family. As to quaternary structure, nearly full-length mature protein and an internal LRR-containing fragment interact in vitro with human intestinal mucin-2 (MUC2) but not with mucin-1. LRR fragment binding is slightly better at pH 5.5, (the pH of the intestine) than at pH 7.4.

It is found in the secreted. It localises to the cell wall. Despite being transcribed during bacterial growth in culture the protein is only detected in infected mice. In terms of biological role, involved in several steps of L.monocytogenes infection by both intravenous and oral infection. Probably acts as an adhesion; upon ectopic expression in L.innocula bacteria adhere better to human cell lines. The sequence is that of Internalin J (inlJ) from Listeria monocytogenes serovar 1/2a (strain ATCC BAA-679 / EGD-e).